Reading from the N-terminus, the 137-residue chain is Large ribosomal subunit protein uL16 (137 aa).

It belongs to the universal ribosomal protein uL16 family. In terms of assembly, part of the 50S ribosomal subunit.

Binds 23S rRNA and is also seen to make contacts with the A and possibly P site tRNAs. This chain is Large ribosomal subunit protein uL16, found in Psychrobacter arcticus (strain DSM 17307 / VKM B-2377 / 273-4).